Here is a 436-residue protein sequence, read N- to C-terminus: EPS I polysaccharide export inner membrane protein EpsE (436 aa).

12 consecutive transmembrane segments (helical) span residues 20 to 40 (VLGL…NIML), 49 to 69 (FGLF…LATG), 91 to 111 (LCAF…ALYL), 132 to 152 (MAAI…FLYA), 160 to 180 (ASVS…MGPI), 184 to 204 (VVAL…QLVI), 234 to 254 (VLTT…LAAM), 261 to 281 (LALF…PATL), 307 to 327 (ALLF…LLAG), 341 to 361 (AAAS…SVLL), 375 to 395 (FAMA…ALRL), and 396 to 416 (GYGA…LILF).

It to E.coli bicyclomycin resistance protein (BCR).

It is found in the cell inner membrane. In terms of biological role, probably involved in polymerization and/or export of exopolysaccharide EPS I which functions as a virulence factor. May play a role in export of EPS I or its intermediates across the membranes. The protein is EPS I polysaccharide export inner membrane protein EpsE (epsE) of Ralstonia nicotianae (strain ATCC BAA-1114 / GMI1000) (Ralstonia solanacearum).